A 227-amino-acid polypeptide reads, in one-letter code: (S)-2-haloacid dehalogenase 1 (227 aa).

Asp-10 serves as the catalytic Nucleophile. Residues 11–12, Arg-41, and 118–119 each bind an (S)-2-haloacid; these read AY and SN. The segment at 175–180 is important for catalytic activity; it reads SSNAWD.

It belongs to the HAD-like hydrolase superfamily. S-2-haloalkanoic acid dehalogenase family.

The catalysed reaction is an (S)-2-haloacid + H2O = a (2R)-2-hydroxycarboxylate + a halide anion + H(+). It catalyses the reaction (S)-2-chloropropanoate + H2O = (R)-lactate + chloride + H(+). Catalyzes the hydrolytic dehalogenation of small (S)-2-haloalkanoic acids to yield the corresponding (R)-2-hydroxyalkanoic acids. Acts on acids of short chain lengths, C(2) to C(4), with inversion of configuration at C-2. Active with 2-halogenated carboxylic acids and converts only the S-isomer (or L-isomer) of 2-chloropropionic acid with inversion of configuration to produce R-lactate (or D-isomer). This is (S)-2-haloacid dehalogenase 1 from Pseudomonas sp. (strain CBS-3).